Here is a 435-residue protein sequence, read N- to C-terminus: Xylose isomerase (435 aa).

Catalysis depends on residues H99 and D102. Mg(2+) is bound by residues E230, E266, H269, D294, D305, D307, and D337.

This sequence belongs to the xylose isomerase family. As to quaternary structure, homotetramer. Requires Mg(2+) as cofactor.

The protein localises to the cytoplasm. The enzyme catalyses alpha-D-xylose = alpha-D-xylulofuranose. In Listeria welshimeri serovar 6b (strain ATCC 35897 / DSM 20650 / CCUG 15529 / CIP 8149 / NCTC 11857 / SLCC 5334 / V8), this protein is Xylose isomerase.